We begin with the raw amino-acid sequence, 345 residues long: Heat-inducible transcription repressor HrcA (345 aa).

It belongs to the HrcA family.

In terms of biological role, negative regulator of class I heat shock genes (grpE-dnaK-dnaJ and groELS operons). Prevents heat-shock induction of these operons. The sequence is that of Heat-inducible transcription repressor HrcA from Listeria monocytogenes serotype 1/2a (strain 10403S).